The chain runs to 109 residues: Fluoride-specific ion channel FluC (109 aa).

3 helical membrane-spanning segments follow: residues 21-41 (FFLN…GFVI), 52-72 (ILLT…LFLY), and 83-103 (LFFY…AGFL).

Belongs to the fluoride channel Fluc/FEX (TC 1.A.43) family.

The protein localises to the cell inner membrane. It carries out the reaction fluoride(in) = fluoride(out). Fluoride-specific ion channel. Important for reducing fluoride concentration in the cell, thus reducing its toxicity. This is Fluoride-specific ion channel FluC from Prochlorococcus marinus (strain MIT 9515).